The chain runs to 504 residues: L-amino-acid oxidase (504 aa).

The first 18 residues, 1 to 18 (MNVFFMFSLLFLAALGSC), serve as a signal peptide directing secretion. Cys-28 and Cys-191 are joined by a disulfide. Residues 61-62 (MS), 81-82 (EA), Arg-89, and 105-108 (GPMR) each bind FAD. Arg-108 contacts substrate. The N-linked (GlcNAc...) asparagine glycan is linked to Asn-190. His-241 lines the substrate pocket. Val-279 lines the FAD pocket. A disulfide bond links Cys-349 and Cys-430. Residue Asn-379 is glycosylated (N-linked (GlcNAc...) asparagine). Substrate is bound at residue Tyr-390. FAD-binding positions include Glu-475 and 482–487 (GWIDST). 482-483 (GW) is a binding site for substrate.

The protein belongs to the flavin monoamine oxidase family. FIG1 subfamily. In terms of assembly, homodimer; non-covalently linked. FAD is required as a cofactor. As to expression, expressed by the venom gland.

The protein resides in the secreted. It carries out the reaction an L-alpha-amino acid + O2 + H2O = a 2-oxocarboxylate + H2O2 + NH4(+). The enzyme catalyses L-leucine + O2 + H2O = 4-methyl-2-oxopentanoate + H2O2 + NH4(+). In terms of biological role, catalyzes an oxidative deamination of predominantly hydrophobic and aromatic L-amino acids, thus producing hydrogen peroxide that may contribute to the diverse toxic effects of this enzyme. Shows activity on L-Leu. Exhibits diverse biological activities, such as apoptosis, and inhibition of agonist- and shear stress-induced platelet aggregation (SIPA). Effects of snake L-amino oxidases on platelets are controversial, since they either induce aggregation or inhibit agonist-induced aggregation. These different effects are probably due to different experimental conditions. This protein may also induce hemorrhage, hemolysis, edema, antibacterial and antiparasitic activities. This is L-amino-acid oxidase from Gloydius blomhoffii (Mamushi).